Reading from the N-terminus, the 761-residue chain is Xaa-Pro dipeptidyl-peptidase (761 aa).

Residues serine 347, aspartate 467, and histidine 497 each act as charge relay system in the active site.

Belongs to the peptidase S15 family. Homodimer.

The protein resides in the cytoplasm. It catalyses the reaction Hydrolyzes Xaa-Pro-|- bonds to release unblocked, N-terminal dipeptides from substrates including Ala-Pro-|-p-nitroanilide and (sequentially) Tyr-Pro-|-Phe-Pro-|-Gly-Pro-|-Ile.. Functionally, removes N-terminal dipeptides sequentially from polypeptides having unsubstituted N-termini provided that the penultimate residue is proline. The protein is Xaa-Pro dipeptidyl-peptidase of Streptococcus agalactiae serotype V (strain ATCC BAA-611 / 2603 V/R).